The chain runs to 468 residues: MTTKSLGSFNSVISKNKIHFISLGCSRNLVDSEVMLGILLKAGYESTNEIEDADYLILNTCAFLKSARDEAKDYLDHLIDVKKENAKIIVTGCMTSNHKDELKPWMSHIHYLLGSGDVENILSAIESRESGEKISAKSYIEMGEVPRQLSTPKHYAYLKVAEGCRKRCAFCIIPSIKGKLRSKPLDQILKEFRILVNKSVKEIILIAQDLGDYGKDLSTDRSSQLESLLHELLKEPGDYWLRMLYLYPDEVSDGIIDLMQSNPKLLPYVDIPLQHINDRILKQMRRTTSREQILGFLEKLRAKVPQVYIRSSVIVGFPGETQEEFQELADFIGEGWIDNLGIFLYSQEANTPAAELPDQIPEKVKESRLKILSQIQKRNVDKHNQKLIGEKIEAVIDNYHPETNLLLTARFYGQAPEVDPCIIVNEAKLVSHFGERCFIEITGTAGYDLVGRVVKKSQNQALLKTSKA.

The 115-residue stretch at 16 to 130 folds into the MTTase N-terminal domain; the sequence is NKIHFISLGC…ILSAIESRES (115 aa). [4Fe-4S] cluster is bound by residues C25, C61, C93, C164, C168, and C171. The region spanning 150-382 is the Radical SAM core domain; the sequence is STPKHYAYLK…SQIQKRNVDK (233 aa). The region spanning 385–455 is the TRAM domain; it reads QKLIGEKIEA…GYDLVGRVVK (71 aa).

Belongs to the methylthiotransferase family. RimO subfamily. [4Fe-4S] cluster is required as a cofactor.

It localises to the cytoplasm. The catalysed reaction is L-aspartate(89)-[ribosomal protein uS12]-hydrogen + (sulfur carrier)-SH + AH2 + 2 S-adenosyl-L-methionine = 3-methylsulfanyl-L-aspartate(89)-[ribosomal protein uS12]-hydrogen + (sulfur carrier)-H + 5'-deoxyadenosine + L-methionine + A + S-adenosyl-L-homocysteine + 2 H(+). Catalyzes the methylthiolation of an aspartic acid residue of ribosomal protein uS12. In Chlamydia pneumoniae (Chlamydophila pneumoniae), this protein is Ribosomal protein uS12 methylthiotransferase RimO.